The primary structure comprises 538 residues: Cytochrome P450 monooxygenase cfoH (538 aa).

Residues 24 to 44 (VLTFFAILLVAILLWYMIPYF) form a helical membrane-spanning segment. C471 is a binding site for heme.

This sequence belongs to the cytochrome P450 family. It depends on heme as a cofactor.

It is found in the membrane. It functions in the pathway secondary metabolite biosynthesis; flavonoid biosynthesis. Functionally, cytochrome P450 monooxygenase; part of the gene cluster that mediates the biosynthesis of chlorflavonin, a fungal flavonoid with acetolactate synthase inhibitory activity. Within the pathway, cfoH is responsible for the hydroxylation of the flavonoid skeleton at position C2'. The pathway begins with the PKS-NRPS hybrid synthetase cfoA that uses benzoic acid or p-hydroxybenzoic acid as a starter unit with four rounds of chain elongation using malonyl-CoA to form the chalcone skeleton. Then, a new type of chalcone isomerase, cfoK, catalyzes the conversion of the chalcone into a flavanone by a histidine-mediated oxa-Michael addition mechanism. The desaturation of flavanone to flavone is catalyzed by a new type of flavone synthase, the flavin mononucleotide (FMN)-dependent oxidoreductase cfoJ. Monooxygenases cfoF, cfoG, and P450 cfoH are responsible for the hydroxylation of the flavonoid skeleton at sites C3, C8, and C2', respectively. Like cfoF, the dehydratase cfoI plays also a role in the hydroxylation of position C3. Methyltransferases cfoB, cfoC, and cfoD then catalyze the methylation of C7-OH, C8-OH, and C3-OH, respectively. Finally, the monooxygenase cfoE is responsible for the chlorination of flavonoid at position C3'. This chain is Cytochrome P450 monooxygenase cfoH, found in Aspergillus candidus.